A 228-amino-acid chain; its full sequence is PKHD-type hydroxylase Rmet_3078 (228 aa).

The Fe2OG dioxygenase domain maps to 80–180 (IVYPPMFNRY…RVGCFFWIQS (101 aa)). Fe cation contacts are provided by His-98, Asp-100, and His-161. Residue Arg-171 coordinates 2-oxoglutarate.

Requires Fe(2+) as cofactor. The cofactor is L-ascorbate.

In Cupriavidus metallidurans (strain ATCC 43123 / DSM 2839 / NBRC 102507 / CH34) (Ralstonia metallidurans), this protein is PKHD-type hydroxylase Rmet_3078.